The primary structure comprises 1506 residues: Gag-Pol polyprotein (1506 aa).

2 consecutive CCHC-type zinc fingers follow at residues 385 to 402 (QKCY…QCRQ) and 404 to 421 (IICH…DCRQ). Residues 459–530 (KKLLVDTGAD…SPVEVLGRDN (72 aa)) form the Peptidase A2 domain. The Protease; shared with dimeric partner role is filled by aspartate 464. The Reverse transcriptase domain occupies 587-776 (EGKVGRAPPH…YPAKWLGFEL (190 aa)). Residues aspartate 652, aspartate 727, aspartate 728, aspartate 980, glutamate 1012, aspartate 1032, and aspartate 1085 each coordinate Mg(2+). The region spanning 971 to 1093 (VVPGPTYYTD…IDRYISEIFL (123 aa)) is the RNase H type-1 domain. An Integrase-type zinc finger spans residues 1228 to 1269 (ENIPLAEEEHNKWHQDAVSLHLEFGIPRTAAEDIVQQCDVCQ). 4 residues coordinate Zn(2+): histidine 1237, histidine 1241, cysteine 1265, and cysteine 1268. The region spanning 1270–1430 (ENKMPSTLRG…SPMDIFIFNK (161 aa)) is the Integrase catalytic domain. Positions 1291, 1343, and 1379 each coordinate Mg(2+). Residues 1447-1499 (RFCYYRTRKRGHPGEWQGPTQVLWGGDGAIVVKDRGTDRYLVIANKDVKFIPP) constitute a DNA-binding region (integrase-type).

The protein belongs to the retroviral Pol polyprotein family. As to quaternary structure, homotetramer; further associates as a homohexadecamer. The cofactor is Mg(2+). Post-translationally, specific enzymatic cleavages by the viral protease yield mature proteins.

It localises to the virion. The catalysed reaction is 3'-end directed exonucleolytic cleavage of viral RNA-DNA hybrid.. The enzyme catalyses Endonucleolytic cleavage to 5'-phosphomonoester.. It catalyses the reaction dUTP + H2O = dUMP + diphosphate + H(+). It carries out the reaction DNA(n) + a 2'-deoxyribonucleoside 5'-triphosphate = DNA(n+1) + diphosphate. Mediates, with Gag polyprotein, the essential events in virion assembly, including binding the plasma membrane, making the protein-protein interactions necessary to create spherical particles, recruiting the viral Env proteins, and packaging the genomic RNA via direct interactions with the RNA packaging sequence. Functionally, targets the polyprotein to the plasma membrane. Its function is as follows. Forms the core that encapsulates the genomic RNA-nucleocapsid complex in the virion. In terms of biological role, encapsulates and protects viral dimeric unspliced genomic RNA (gRNA). Binds these RNAs through its zinc fingers. Acts as a nucleic acid chaperone which is involved in rearrangement of nucleic acid secondary structure during gRNA retrotranscription. Also facilitates template switch leading to recombination. The aspartyl protease mediates proteolytic cleavages of Gag and Gag-Pol polyproteins during or shortly after the release of the virion from the plasma membrane. Cleavages take place as an ordered, step-wise cascade to yield mature proteins. This process is called maturation. Displays maximal activity during the budding process just prior to particle release from the cell. Functionally, RT is a multifunctional enzyme that converts the viral dimeric RNA genome into dsDNA in the cytoplasm, shortly after virus entry into the cell. This enzyme displays a DNA polymerase activity that can copy either DNA or RNA templates, and a ribonuclease H (RNase H) activity that cleaves the RNA strand of RNA-DNA heteroduplexes in a partially processive 3' to 5' endonucleasic mode. Conversion of viral genomic RNA into dsDNA requires many steps. A tRNA binds to the primer-binding site (PBS) situated at the 5' end of the viral RNA. RT uses the 3' end of the tRNA primer to perfom a short round of RNA-dependent minus-strand DNA synthesis. The reading proceeds through the U5 region and ends after the repeated (R) region which is present at both ends of viral RNA. The portion of the RNA-DNA heteroduplex is digested by the RNase H, resulting in a ssDNA product attached to the tRNA primer. This ssDNA/tRNA hybridizes with the identical R region situated at the 3' end of viral RNA. This template exchange, known as minus-strand DNA strong stop transfer, can be either intra- or intermolecular. RT uses the 3' end of this newly synthesized short ssDNA to perfom the RNA-dependent minus-strand DNA synthesis of the whole template. RNase H digests the RNA template except for a polypurine tract (PPT) situated at the 5' end of the genome. It is not clear if both polymerase and RNase H activities are simultaneous. RNase H probably can proceed both in a polymerase-dependent (RNA cut into small fragments by the same RT performing DNA synthesis) and a polymerase-independent mode (cleavage of remaining RNA fragments by free RTs). Secondly, RT performs DNA-directed plus-strand DNA synthesis using the PPT that has not been removed by RNase H as primers. PPT and tRNA primers are then removed by RNase H. The 3' and 5' ssDNA PBS regions hybridize to form a circular dsDNA intermediate. Strand displacement synthesis by RT to the PBS and PPT ends produces a blunt ended, linear dsDNA copy of the viral genome that includes long terminal repeats (LTRs) at both ends. Its function is as follows. Catalyzes viral DNA integration into the host chromosome, by performing a series of DNA cutting and joining reactions. The polypeptide is Gag-Pol polyprotein (pol) (Maedi visna virus (strain KV1772) (MVV)).